A 350-amino-acid polypeptide reads, in one-letter code: tRNA uridine(34) hydroxylase (350 aa).

Residues 146 to 240 form the Rhodanese domain; sequence DDPDALFIDM…YARKAREQGL (95 aa). Catalysis depends on Cys-200, which acts as the Cysteine persulfide intermediate.

This sequence belongs to the TrhO family.

It catalyses the reaction uridine(34) in tRNA + AH2 + O2 = 5-hydroxyuridine(34) in tRNA + A + H2O. Catalyzes oxygen-dependent 5-hydroxyuridine (ho5U) modification at position 34 in tRNAs, the first step in 5-carboxymethoxyuridine (cmo5U) biosynthesis. May be part of an alternate pathway, which is able to bypass cmo5U biogenesis in a subset of tRNAs under aerobic conditions. In Escherichia coli O81 (strain ED1a), this protein is tRNA uridine(34) hydroxylase.